The primary structure comprises 230 residues: Protein tumorous testis (230 aa).

In terms of domain architecture, RRM spans 37 to 128 (GELFLSCIPR…RELVLKNVES (92 aa)).

As to quaternary structure, part of a complex composed of at least tut, bam and bgcn; complex formation does not require RNA. Interacts with bam (via N-terminus); the interaction is direct. Interacts with bgcn; the interaction is indirect and is mediated by bam. As part of the bam-bgcn-tut complex associates with twin; may recruit the CCR4-NOT1 deadenylation complex to mRNA 3'UTRs to mediate post-transcriptional regulation of expression.

The protein localises to the cytoplasm. RNA binding protein that forms a complex with bam and bgcn, involved in 3'UTR-dependent regulation of a subset of mRNAs. Preferentially binds a long isoform of mei-P26 transcripts. Involved in 3'UTR-dependent post-transcriptional repression of several 3'-RNA processing factors. Involved in promoting germline stem cell lineage differentiation and mitosis-to-meiosis transition. Required for proper transit amplification of spermatogonia. The chain is Protein tumorous testis from Drosophila melanogaster (Fruit fly).